The sequence spans 334 residues: Phosphatidylglycerol--prolipoprotein diacylglyceryl transferase (334 aa).

A run of 4 helical transmembrane segments spans residues 22 to 42, 54 to 74, 105 to 125, and 131 to 151; these read FLPF…VVAA, AEPG…IIGA, IWEG…GVGI, and GLRF…AQAI. Arg153 is an a 1,2-diacyl-sn-glycero-3-phospho-(1'-sn-glycerol) binding site. Helical transmembrane passes span 191–211 and 251–271; these read LFQP…FVIL and FLGI…GAII. The disordered stretch occupies residues 296–334; that stretch reads PQAEVESGETDPEEILHADDDEERTGTHKPQATSLSGSN. A compositionally biased stretch (acidic residues) spans 301 to 318; that stretch reads ESGETDPEEILHADDDEE. Residues 323–334 show a composition bias toward polar residues; that stretch reads HKPQATSLSGSN.

Belongs to the Lgt family.

It is found in the cell membrane. It carries out the reaction L-cysteinyl-[prolipoprotein] + a 1,2-diacyl-sn-glycero-3-phospho-(1'-sn-glycerol) = an S-1,2-diacyl-sn-glyceryl-L-cysteinyl-[prolipoprotein] + sn-glycerol 1-phosphate + H(+). It functions in the pathway protein modification; lipoprotein biosynthesis (diacylglyceryl transfer). Its function is as follows. Catalyzes the transfer of the diacylglyceryl group from phosphatidylglycerol to the sulfhydryl group of the N-terminal cysteine of a prolipoprotein, the first step in the formation of mature lipoproteins. This Leifsonia xyli subsp. xyli (strain CTCB07) protein is Phosphatidylglycerol--prolipoprotein diacylglyceryl transferase.